The primary structure comprises 366 residues: Flagellar P-ring protein (366 aa).

The N-terminal stretch at 1-20 (MVIKFLSALILLLVTTAAQA) is a signal peptide.

It belongs to the FlgI family. The basal body constitutes a major portion of the flagellar organelle and consists of four rings (L,P,S, and M) mounted on a central rod.

The protein localises to the periplasm. Its subcellular location is the bacterial flagellum basal body. Assembles around the rod to form the L-ring and probably protects the motor/basal body from shearing forces during rotation. The polypeptide is Flagellar P-ring protein (Escherichia coli O1:K1 / APEC).